The primary structure comprises 337 residues: RNA 3'-terminal phosphate cyclase (337 aa).

Residues glutamine 101 and 282-285 (HMSD) contribute to the ATP site. Histidine 306 (tele-AMP-histidine intermediate) is an active-site residue.

This sequence belongs to the RNA 3'-terminal cyclase family. Type 1 subfamily.

The protein resides in the cytoplasm. The enzyme catalyses a 3'-end 3'-phospho-ribonucleotide-RNA + ATP = a 3'-end 2',3'-cyclophospho-ribonucleotide-RNA + AMP + diphosphate. Catalyzes the conversion of 3'-phosphate to a 2',3'-cyclic phosphodiester at the end of RNA. The mechanism of action of the enzyme occurs in 3 steps: (A) adenylation of the enzyme by ATP; (B) transfer of adenylate to an RNA-N3'P to produce RNA-N3'PP5'A; (C) and attack of the adjacent 2'-hydroxyl on the 3'-phosphorus in the diester linkage to produce the cyclic end product. The biological role of this enzyme is unknown but it is likely to function in some aspects of cellular RNA processing. In Saccharolobus islandicus (strain M.16.4 / Kamchatka #3) (Sulfolobus islandicus), this protein is RNA 3'-terminal phosphate cyclase.